The chain runs to 181 residues: Protein Ves (181 aa).

The protein belongs to the Ves family.

In Cronobacter sakazakii (strain ATCC BAA-894) (Enterobacter sakazakii), this protein is Protein Ves.